Consider the following 288-residue polypeptide: Homoserine kinase (288 aa).

79–89 (PPARGLGSSSA) contributes to the ATP binding site.

It belongs to the GHMP kinase family. Homoserine kinase subfamily.

It is found in the cytoplasm. It carries out the reaction L-homoserine + ATP = O-phospho-L-homoserine + ADP + H(+). The protein operates within amino-acid biosynthesis; L-threonine biosynthesis; L-threonine from L-aspartate: step 4/5. Catalyzes the ATP-dependent phosphorylation of L-homoserine to L-homoserine phosphate. The sequence is that of Homoserine kinase from Listeria monocytogenes serotype 4b (strain F2365).